The primary structure comprises 427 residues: Tuberculostearic acid methyltransferase UfaA1 (427 aa).

This sequence belongs to the CFA/CMAS family.

Its pathway is lipid metabolism; fatty acid biosynthesis. Inhibited by S-adenosyl-L-homocysteine. Functionally, involved in the biosynthesis of the tuberculostearic acid (10-methylstearic-acid or TSA), a constituent lipid of the mycobacterial cell wall. Catalyzes the transfer of the methyl group from S-adenosyl-L-methionine (SAM) to the double bond of oleic acid in phosphatidylethanolamine or phosphatidylcholine to produce TSA. The polypeptide is Tuberculostearic acid methyltransferase UfaA1 (Mycobacterium tuberculosis (strain ATCC 25618 / H37Rv)).